Here is a 267-residue protein sequence, read N- to C-terminus: Mitochondrial S-adenosylmethionine carrier protein (267 aa).

Solcar repeat units lie at residues 4–77 (REFT…TKSV), 86–168 (LAPI…LKAV), and 177–265 (LDSW…VRRT). A run of 6 helical transmembrane segments spans residues 5-25 (EFTA…LTLF), 49-69 (IYAG…AFFV), 85-105 (NLAP…ACLI), 142-162 (RGYG…FPLW), 182-202 (AAVC…PLDV), and 238-258 (FAGS…FLGA).

It belongs to the mitochondrial carrier (TC 2.A.29) family.

The protein resides in the mitochondrion inner membrane. It catalyses the reaction S-adenosyl-L-homocysteine(out) + S-adenosyl-L-methionine(in) = S-adenosyl-L-homocysteine(in) + S-adenosyl-L-methionine(out). Its function is as follows. Mitochondrial S-adenosyl-L-methionine/S-adenosyl-L-homocysteine antiporter. Mediates the exchange of cytosolic S-adenosyl-L-methionine, the predominant methyl-group donor for macromolecule methylation processes, for mitochondrial S-adenosylhomocysteine(SAH), a by-product of methylation reactions. The protein is Mitochondrial S-adenosylmethionine carrier protein (slc25a26) of Danio rerio (Zebrafish).